The following is a 322-amino-acid chain: NAD(P)H-dependent D-xylose reductase (322 aa).

Tyrosine 52 serves as the catalytic Proton donor. Histidine 114 provides a ligand contact to substrate. NAD(+) contacts are provided by residues 169–170 (SN), 218–227 (SSFGPQSFVE), and 274–284 (KSNLPERLVQN).

Belongs to the aldo/keto reductase family. In terms of assembly, homodimer.

The enzyme catalyses xylitol + NAD(+) = D-xylose + NADH + H(+). The catalysed reaction is xylitol + NADP(+) = D-xylose + NADPH + H(+). It participates in carbohydrate metabolism; D-xylose degradation. Its function is as follows. Reduces D-xylose into xylitol. Has a preference for NADPH, but can also utilize NADH as cosubstrate. The polypeptide is NAD(P)H-dependent D-xylose reductase (XYL1) (Candida tenuis (Yeast)).